A 311-amino-acid polypeptide reads, in one-letter code: Taste receptor type 2 member 9 (311 aa).

The Extracellular portion of the chain corresponds to 1-9 (MPSTIEAIY). Residues 10–32 (IILIAGELTIGIWGNGFIVLVNC) form a helical membrane-spanning segment. Over 33 to 52 (IDWLKRRDVSLIDIILISLA) the chain is Cytoplasmic. The chain crosses the membrane as a helical span at residues 53 to 72 (ISRICLLCVISLDGFFILLF). Topologically, residues 73 to 86 (PGTYDTNVLESIMD) are extracellular. The chain crosses the membrane as a helical span at residues 87–109 (AVWTFANNSSLWFTSCLSIFYLL). At 110–128 (KIANISHPFFFWLKLKINK) the chain is on the cytoplasmic side. Residues 129–146 (VILAILLGSFLISLIISF) form a helical membrane-spanning segment. Topologically, residues 147–179 (PINGMWYNLFKVSHEENITWAFKVSTIPGAFKQ) are extracellular. The N-linked (GlcNAc...) asparagine glycan is linked to N163. Residues 180–202 (LTLNLGAMVPFILCLISFFLLLF) traverse the membrane as a helical segment. At 203–233 (SLVRHTKQIQLHATGFRDPSTEAHMRAVKAV) the chain is on the cytoplasmic side. The helical transmembrane segment at 234–256 (IIFLLLLILYYPVFLVMTSSTLI) threads the bilayer. Topologically, residues 257–260 (PQGK) are extracellular. A helical transmembrane segment spans residues 261–283 (LVLMIGDIVTVIFPSSHSFILIM). At 284 to 311 (GNSKLRAAFLKMLRFVKGFLRRRKPFVP) the chain is on the cytoplasmic side.

The protein belongs to the G-protein coupled receptor T2R family.

It localises to the membrane. Gustducin-coupled receptor implicated in the perception of bitter compounds in the oral cavity and the gastrointestinal tract. Signals through PLCB2 and the calcium-regulated cation channel TRPM5. The sequence is that of Taste receptor type 2 member 9 (TAS2R9) from Macaca mulatta (Rhesus macaque).